The primary structure comprises 643 residues: Replication protein E1 (643 aa).

The disordered stretch occupies residues 28-58; that stretch reads THGQRQVSSDEDEDETETGEDLDFIDNRVPG. The span at 36–51 shows a compositional bias: acidic residues; sequence SDEDEDETETGEDLDF. Positions 84 to 86 match the Nuclear localization signal motif; sequence KRK. Phosphoserine; by host is present on residues Ser90 and Ser103. The Nuclear export signal motif lies at 102 to 111; the sequence is LSPRLDAISL. Disordered regions lie at residues 119–138 and 143–181; these read KRRLFETEPPDSGYGNTQMV and EEVTGDEESQGGRPVEDQEEERQGGDGEADLTVHTPQSG. The tract at residues 180–346 is DNA-binding region; sequence SGTDAAGSVL…QTLVGHSMED (167 aa). Residues 445–595 form the SF3 helicase domain; that stretch reads VEFVSFLAAF…FPFASPGEPL (151 aa). 471-478 contacts ATP; that stretch reads GPADTGKS. Residue Lys552 forms a Glycyl lysine isopeptide (Lys-Gly) (interchain with G-Cter in SUMO) linkage. Residues 617–643 form a disordered region; it reads NSPEEQDDNGNTGEPFRCVPGDVARTV.

It belongs to the papillomaviridae E1 protein family. As to quaternary structure, can form hexamers. Interacts with E2 protein; this interaction increases E1 DNA binding specificity. Interacts with host DNA polymerase subunit POLA2. Interacts with host single stranded DNA-binding protein RPA1. Interacts with host TOP1; this interaction stimulates the enzymatic activity of TOP1. Post-translationally, phosphorylated. In terms of processing, sumoylated.

It is found in the host nucleus. The catalysed reaction is Couples ATP hydrolysis with the unwinding of duplex DNA by translocating in the 3'-5' direction.. It carries out the reaction ATP + H2O = ADP + phosphate + H(+). Its function is as follows. ATP-dependent DNA 3'-5' helicase required for initiation of viral DNA replication. It forms a complex with the viral E2 protein. The E1-E2 complex binds to the replication origin which contains binding sites for both proteins. During the initial step, a dimer of E1 interacts with a dimer of protein E2 leading to a complex that binds the viral origin of replication with high specificity. Then, a second dimer of E1 displaces the E2 dimer in an ATP-dependent manner to form the E1 tetramer. Following this, two E1 monomers are added to each half of the site, which results in the formation of two E1 trimers on the viral ori. Subsequently, two hexamers will be created. The double hexamer acts as a bi-directional helicase machinery and unwinds the viral DNA and then recruits the host DNA polymerase to start replication. This chain is Replication protein E1, found in Human papillomavirus type 2a.